The sequence spans 369 residues: Methionine aminopeptidase 1B, chloroplastic (369 aa).

The transit peptide at 1 to 61 (MASSVFLSSF…YSPRQFHVSA (61 aa)) directs the protein to the chloroplast. Histidine 199 lines the substrate pocket. The a divalent metal cation site is built by aspartate 216, aspartate 227, and histidine 290. Histidine 297 serves as a coordination point for substrate. A divalent metal cation is bound by residues glutamate 322 and glutamate 353.

Belongs to the peptidase M24A family. Methionine aminopeptidase type 1 subfamily. Requires Co(2+) as cofactor. Zn(2+) is required as a cofactor. Mn(2+) serves as cofactor. The cofactor is Fe(2+). In terms of tissue distribution, ubiquitous. Preferentially expressed in green tissues.

The protein localises to the plastid. Its subcellular location is the chloroplast. The enzyme catalyses Release of N-terminal amino acids, preferentially methionine, from peptides and arylamides.. Removes the N-terminal methionine from nascent proteins. The N-terminal methionine is often cleaved when the second residue in the primary sequence is small and uncharged (Met-Ala-, Cys, Gly, Pro, Ser, Thr, or Val). The protein is Methionine aminopeptidase 1B, chloroplastic (MAP1B) of Arabidopsis thaliana (Mouse-ear cress).